We begin with the raw amino-acid sequence, 786 residues long: Toll-like receptor 1 (786 aa).

The first 24 residues, 1 to 24 (MTSIFHFAIIFMLILQIRIQLSEE), serve as a signal peptide directing secretion. At 25–580 (SEFLVDRSKN…HMSELSCNIT (556 aa)) the chain is on the extracellular side. N-linked (GlcNAc...) asparagine glycosylation occurs at Asn-51. LRR repeat units lie at residues 54-77 (QNYI…LIIS), 78-101 (HNRI…LDLS), 102-125 (HNKL…SFNA), 126-150 (FDAL…STTH), 151-175 (LEKS…GETY), 176-199 (GEKE…FPTN), 200-223 (KEFH…NIKC), 224-250 (VLED…SNLT), 251-278 (LNNI…YFSI), 279-308 (SNVK…HQVV), 309-337 (SDVF…SGTR), 338-361 (MVHM…NLLT), 362-388 (DTVF…KELS), 389-414 (KIAE…SYDE), 415-437 (KKGD…ILTD), 438-457 (TIFR…SNKI), 458-478 (KSIP…VAFN), 479-500 (SLTD…IDHN), and 501-524 (SVSH…AGDN). A disulfide bridge connects residues Cys-110 and Cys-132. 2 N-linked (GlcNAc...) asparagine glycosylation sites follow: Asn-137 and Asn-163. The cysteines at positions 223 and 230 are disulfide-linked. Residues 313–316 (GFPQ) form an interaction with bacterial lipopeptide region. A glycan (N-linked (GlcNAc...) asparagine) is linked at Asn-330. The cysteines at positions 343 and 368 are disulfide-linked. Cys-419 and Cys-442 are oxidised to a cystine. Residue Asn-429 is glycosylated (N-linked (GlcNAc...) asparagine). In terms of domain architecture, LRRCT spans 525–579 (PFQCTCELGEFVKNIDQVSSEVLEGWPDSYKCDYPESYRGTLLKDFHMSELSCNI). Asn-578 carries N-linked (GlcNAc...) asparagine glycosylation. A helical transmembrane segment spans residues 581–601 (LLIVTIVATMLVLAVTVTSLC). The Cytoplasmic segment spans residues 602–786 (SYLDLPWYLR…NIKLTEQAKK (185 aa)). Positions 635-776 (LQFHAFISYS…LFWANLRAAI (142 aa)) constitute a TIR domain.

This sequence belongs to the Toll-like receptor family. In terms of assembly, interacts (via extracellular domain) with TLR2. TLR2 seems to exist in heterodimers with either TLR1 or TLR6 before stimulation by the ligand. The heterodimers form bigger oligomers in response to their corresponding ligands as well as further heterotypic associations with other receptors such as CD14 and/or CD36. The activation cluster TLR2:TLR1:CD14 forms in response to triacylated lipopeptides. Binds MYD88 (via TIR domain). Interacts with CNPY3. Interacts with neutrophil recruitment protein from Aedes aegypti saliva; the interaction probably promotes activation of canonical NF-kappa-B signaling in skin-resident macrophages and subsequent expression of neutrophil chemoattractants. Ubiquitous. Highly expressed in spleen, ovary, peripheral blood leukocytes, thymus and small intestine.

The protein localises to the cell membrane. Its subcellular location is the cytoplasmic vesicle. It localises to the phagosome membrane. It is found in the membrane raft. The protein resides in the golgi apparatus. Participates in the innate immune response to microbial agents. Specifically recognizes diacylated and triacylated lipopeptides. Cooperates with TLR2 to mediate the innate immune response to bacterial lipoproteins or lipopeptides. Forms the activation cluster TLR2:TLR1:CD14 in response to triacylated lipopeptides, this cluster triggers signaling from the cell surface and subsequently is targeted to the Golgi in a lipid-raft dependent pathway. Acts via MYD88 and TRAF6, leading to NF-kappa-B activation, cytokine secretion and the inflammatory response. The chain is Toll-like receptor 1 (TLR1) from Homo sapiens (Human).